Reading from the N-terminus, the 613-residue chain is MVEALNAVYPYDLALLPEDYEKTTAPDAVQAANAARPFLNPVYPYQQPVAGDFGFPIVMPPFFNSYDFTSIHGNTLSLRLNKPLKRTAKGLQLLLGSGLSVNADGQLESSEGISEADAPLQINDGVLQLSFGEGLSVNDHGELESKGKVEAVTLPLALQDHVMSLSFGQGLQVNDQGQLEALAMVHSTSAPLKVTNNNLELALGRGLIVDDQGQLRLAPNLLWPESPLAIEQGTNHLILFYNQSLDVEDGKLTLPEPFDPLTLDGGRLRMQLAPNSGLAVTEKGSLGINWGEGIQVKEQKITLKVTPANGLAVTEQGGLNINWGNGIKVDEQKVTLKTSNEFALTENGLYLTSPLNPIEVNQHGQLGIALGYGFHAHRGYLELTPQTLWTGLPIGNNGTFHTKQDCKIFLSLTRLGPMVHGTFMLQAPQYELTTNGMREITFSFNSTGGLEQPAPVTYWGALDPPPTAKAAEIENQKRVKKRAAPDPPVEPPPKRRGDLAVLFAKVAEQAMELAKEQAVQAQPPEHVNTDWADHMNLLRFMPNTLVYPTAATIAANLQFHDTRLSLRRATLKIRLNGSPDSAYQLGFMLELVGTQSASIVTDTISFWYYAEDY.

Residues 474 to 496 (ENQKRVKKRAAPDPPVEPPPKRR) form a disordered region.

Belongs to the adenoviridae fiber family. As to quaternary structure, homotrimer. Interacts (via N-terminal tail region) with pentons.

It localises to the virion. It is found in the host nucleus. Forms spikes that protrude from each vertex of the icosahedral capsid. Interacts with host receptor to provide virion initial attachment to target cell. Fiber proteins are shed during virus entry, when virus is still at the cell surface. The polypeptide is Fiber protein (Murine adenovirus A serotype 1 (MAdV-1)).